We begin with the raw amino-acid sequence, 359 residues long: Type-1 angiotensin II receptor (359 aa).

Topologically, residues 1-25 are extracellular; sequence MILNSSTEDGIKRIQDDCPKAGRHN. N-linked (GlcNAc...) asparagine glycosylation occurs at N4. The angiotensin II site is built by Q15 and D17. Cystine bridges form between C18/C274 and C101/C180. The helical transmembrane segment at 26 to 55 threads the bilayer; it reads YIFIMIPTLYSIIFVVGIFGNSLVVIVIYF. At 56–61 the chain is on the cytoplasmic side; the sequence is YMKLKT. Residues 62–89 form a helical membrane-spanning segment; it reads VASVFLLNLALADLCFLLTLPLWAVYTA. The Extracellular segment spans residues 90–98; it reads MEYRWPFGN. The chain crosses the membrane as a helical span at residues 99 to 125; the sequence is YLCKIASASVSFNLYASVFLLTCLSID. The Cytoplasmic segment spans residues 126-141; that stretch reads RYLAIVHPMKSRLRRT. A helical membrane pass occupies residues 142–165; the sequence is MLVAKVTCIIIWLLAGLASLPTII. Over 166 to 190 the chain is Extracellular; it reads HRNVFFIENTNITVCAFHYESQNST. Angiotensin II is bound at residue R167. N-linked (GlcNAc...) asparagine glycosylation is present at N176. Angiotensin II-binding residues include F182, H183, and Y184. An N-linked (GlcNAc...) asparagine glycan is attached at N188. The chain crosses the membrane as a helical span at residues 191–216; sequence LPVGLGLTKNILGFLFPFLIILTSYT. K199 lines the angiotensin II pocket. The Cytoplasmic portion of the chain corresponds to 217-239; that stretch reads LIWKTLKKAYEIQKNKPRKDDIF. Residues 240–268 traverse the membrane as a helical segment; it reads KIILAIVLFFFFSWVPHQIFTFMDVLIQL. Residues 269–278 are Extracellular-facing; that stretch reads GLIRDCKIED. A helical membrane pass occupies residues 279-304; it reads IVDTAMPITICLAYFNNCLNPLFYGF. The Cytoplasmic portion of the chain corresponds to 305 to 359; sequence LGKKFKKYFLQLLKYIPPKAKSHSNLSTKMSTLSYRPSENGNSSTKKPAPCIEVE. Over residues 336 to 350 the composition is skewed to polar residues; it reads TLSYRPSENGNSSTK. The segment at 336-359 is disordered; it reads TLSYRPSENGNSSTKKPAPCIEVE. Residue C355 is the site of S-palmitoyl cysteine attachment.

Belongs to the G-protein coupled receptor 1 family. In terms of assembly, interacts with MAS1. Interacts with ARRB1. Interacts with FLNA (via filamin repeat 21); increases PKA-mediated phosphorylation of FLNA. Post-translationally, C-terminal Ser or Thr residues may be phosphorylated. In terms of tissue distribution, adrenal medulla, cortex and kidney.

The protein resides in the cell membrane. Its function is as follows. Receptor for angiotensin II, a vasoconstricting peptide, which acts as a key regulator of blood pressure and sodium retention by the kidney. The activated receptor in turn couples to G-alpha proteins G(q) (GNAQ, GNA11, GNA14 or GNA15) and thus activates phospholipase C and increases the cytosolic Ca(2+) concentrations, which in turn triggers cellular responses such as stimulation of protein kinase C. The sequence is that of Type-1 angiotensin II receptor (AGTR1) from Bos taurus (Bovine).